Consider the following 92-residue polypeptide: CRISPR-associated endoribonuclease Cas2 1 (92 aa).

Asp-10 lines the Mg(2+) pocket.

The protein belongs to the CRISPR-associated endoribonuclease Cas2 protein family. As to quaternary structure, homodimer, forms a heterotetramer with a Cas1 homodimer. Mg(2+) serves as cofactor.

Its function is as follows. CRISPR (clustered regularly interspaced short palindromic repeat), is an adaptive immune system that provides protection against mobile genetic elements (viruses, transposable elements and conjugative plasmids). CRISPR clusters contain sequences complementary to antecedent mobile elements and target invading nucleic acids. CRISPR clusters are transcribed and processed into CRISPR RNA (crRNA). Functions as a ssRNA-specific endoribonuclease. Involved in the integration of spacer DNA into the CRISPR cassette. The chain is CRISPR-associated endoribonuclease Cas2 1 from Thermodesulfovibrio yellowstonii (strain ATCC 51303 / DSM 11347 / YP87).